We begin with the raw amino-acid sequence, 369 residues long: UDP-N-acetylglucosamine--N-acetylmuramyl-(pentapeptide) pyrophosphoryl-undecaprenol N-acetylglucosamine transferase (369 aa).

UDP-N-acetyl-alpha-D-glucosamine-binding positions include 10–12 (TGG), Asn-124, Ser-195, Ile-252, and Gln-297.

This sequence belongs to the glycosyltransferase 28 family. MurG subfamily.

Its subcellular location is the cell membrane. The catalysed reaction is Mur2Ac(oyl-L-Ala-gamma-D-Glu-L-Lys-D-Ala-D-Ala)-di-trans,octa-cis-undecaprenyl diphosphate + UDP-N-acetyl-alpha-D-glucosamine = beta-D-GlcNAc-(1-&gt;4)-Mur2Ac(oyl-L-Ala-gamma-D-Glu-L-Lys-D-Ala-D-Ala)-di-trans,octa-cis-undecaprenyl diphosphate + UDP + H(+). The protein operates within cell wall biogenesis; peptidoglycan biosynthesis. Cell wall formation. Catalyzes the transfer of a GlcNAc subunit on undecaprenyl-pyrophosphoryl-MurNAc-pentapeptide (lipid intermediate I) to form undecaprenyl-pyrophosphoryl-MurNAc-(pentapeptide)GlcNAc (lipid intermediate II). This Leuconostoc citreum (strain KM20) protein is UDP-N-acetylglucosamine--N-acetylmuramyl-(pentapeptide) pyrophosphoryl-undecaprenol N-acetylglucosamine transferase.